We begin with the raw amino-acid sequence, 457 residues long: Siroheme synthase (457 aa).

A precorrin-2 dehydrogenase /sirohydrochlorin ferrochelatase region spans residues methionine 1–threonine 204. Residues aspartate 22–valine 23 and leucine 43–threonine 44 each bind NAD(+). Serine 128 carries the phosphoserine modification. The uroporphyrinogen-III C-methyltransferase stretch occupies residues glycine 216–tyrosine 457. Proline 225 lines the S-adenosyl-L-methionine pocket. The active-site Proton acceptor is aspartate 248. Lysine 270 serves as the catalytic Proton donor. S-adenosyl-L-methionine contacts are provided by residues glycine 301–aspartate 303, isoleucine 306, threonine 331–alanine 332, methionine 382, and glycine 411.

It in the N-terminal section; belongs to the precorrin-2 dehydrogenase / sirohydrochlorin ferrochelatase family. In the C-terminal section; belongs to the precorrin methyltransferase family.

It catalyses the reaction uroporphyrinogen III + 2 S-adenosyl-L-methionine = precorrin-2 + 2 S-adenosyl-L-homocysteine + H(+). The enzyme catalyses precorrin-2 + NAD(+) = sirohydrochlorin + NADH + 2 H(+). It carries out the reaction siroheme + 2 H(+) = sirohydrochlorin + Fe(2+). The protein operates within cofactor biosynthesis; adenosylcobalamin biosynthesis; precorrin-2 from uroporphyrinogen III: step 1/1. Its pathway is cofactor biosynthesis; adenosylcobalamin biosynthesis; sirohydrochlorin from precorrin-2: step 1/1. It participates in porphyrin-containing compound metabolism; siroheme biosynthesis; precorrin-2 from uroporphyrinogen III: step 1/1. It functions in the pathway porphyrin-containing compound metabolism; siroheme biosynthesis; siroheme from sirohydrochlorin: step 1/1. The protein operates within porphyrin-containing compound metabolism; siroheme biosynthesis; sirohydrochlorin from precorrin-2: step 1/1. In terms of biological role, multifunctional enzyme that catalyzes the SAM-dependent methylations of uroporphyrinogen III at position C-2 and C-7 to form precorrin-2 via precorrin-1. Then it catalyzes the NAD-dependent ring dehydrogenation of precorrin-2 to yield sirohydrochlorin. Finally, it catalyzes the ferrochelation of sirohydrochlorin to yield siroheme. This chain is Siroheme synthase, found in Salmonella heidelberg (strain SL476).